Here is a 152-residue protein sequence, read N- to C-terminus: Ubiquitin-conjugating enzyme E2 2 (152 aa).

In terms of domain architecture, UBC core spans 4–150; it reads PARKRLMRDF…VREVVEQSWT (147 aa). The active-site Glycyl thioester intermediate is the cysteine 88.

Belongs to the ubiquitin-conjugating enzyme family. As to expression, expressed in all tissues examined. Lower levels found in leaves.

It catalyses the reaction S-ubiquitinyl-[E1 ubiquitin-activating enzyme]-L-cysteine + [E2 ubiquitin-conjugating enzyme]-L-cysteine = [E1 ubiquitin-activating enzyme]-L-cysteine + S-ubiquitinyl-[E2 ubiquitin-conjugating enzyme]-L-cysteine.. It participates in protein modification; protein ubiquitination. Functionally, accepts the ubiquitin from the E1 complex and catalyzes its covalent attachment to other proteins. This is Ubiquitin-conjugating enzyme E2 2 (UBC2) from Arabidopsis thaliana (Mouse-ear cress).